The primary structure comprises 515 residues: 1-pyrroline-5-carboxylate dehydrogenase (515 aa).

Catalysis depends on residues Glu-286 and Cys-320.

The protein belongs to the aldehyde dehydrogenase family. RocA subfamily.

The catalysed reaction is L-glutamate 5-semialdehyde + NAD(+) + H2O = L-glutamate + NADH + 2 H(+). The protein operates within amino-acid degradation; L-proline degradation into L-glutamate; L-glutamate from L-proline: step 2/2. In Bacillus pumilus (strain SAFR-032), this protein is 1-pyrroline-5-carboxylate dehydrogenase.